Here is a 902-residue protein sequence, read N- to C-terminus: Cytosolic carboxypeptidase 2 (902 aa).

One can recognise a Peptidase M14 domain in the interval 396–666; that stretch reads YPYTYTDLQC…HVCDTLLDFC (271 aa). Histidine 462, glutamate 465, and histidine 558 together coordinate Zn(2+). Catalysis depends on glutamate 630, which acts as the Proton donor/acceptor. Positions 746–758 are enriched in basic residues; sequence FKKKKKKSLQTRK. Disordered stretches follow at residues 746–770 and 796–879; these read FKKK…KNLM and FKNS…PRSR. A compositionally biased stretch (polar residues) spans 853-866; it reads VSCSPKRTINSSQE.

It belongs to the peptidase M14 family. Interacts with RARRES1, KIF11 AND MAPRE1. Requires Zn(2+) as cofactor.

It localises to the cytoplasm. Its subcellular location is the cytosol. The protein localises to the cytoskeleton. It is found in the microtubule organizing center. The protein resides in the centrosome. It localises to the centriole. Its subcellular location is the cilium basal body. The enzyme catalyses (L-glutamyl)(n+1)-gamma-L-glutamyl-L-glutamyl-[protein] + H2O = (L-glutamyl)(n)-gamma-L-glutamyl-L-glutamyl-[protein] + L-glutamate. With respect to regulation, inhibited by RARRES1. Metallocarboxypeptidase that mediates deglutamylation of tubulin and non-tubulin target proteins. Catalyzes the removal of polyglutamate side chains present on the gamma-carboxyl group of glutamate residues within the C-terminal tail of tubulin protein. Specifically cleaves tubulin long-side-chains, while it is not able to remove the branching point glutamate. Also catalyzes the removal of polyglutamate residues from the carboxy-terminus of non-tubulin proteins such as MYLK. The chain is Cytosolic carboxypeptidase 2 from Homo sapiens (Human).